The sequence spans 238 residues: Riboflavin-binding protein (238 aa).

An N-terminal signal peptide occupies residues 1–17 (MLRFAITLFAVITSSTC). Pyrrolidone carboxylic acid is present on Gln18. Cystine bridges form between Cys22/Cys49, Cys41/Cys90, Cys50/Cys94, Cys74/Cys155, Cys81/Cys127, Cys116/Cys186, Cys120/Cys169, Cys133/Cys151, and Cys184/Cys219. Residue Asn53 is glycosylated (N-linked (GlcNAc...) asparagine). Asn164 carries an N-linked (GlcNAc...) asparagine glycan. Phosphoserine occurs at positions 204, 205, 208, 209, 210, 212, 213, and 214.

The protein belongs to the folate receptor family. Post-translationally, plasma and yolk RBPS have the same carbohydrate components, whereas egg-white RBP has a different, ovomucoid-type carbohydrate chain. Plasma RBP has the same C-terminal sequence as the egg-white RBP, which suggests that the C-terminal residues are cleaved off upon incorporation into the oocyte. As to expression, yolk RBP is synthesized in the liver; egg-white RBP is synthesized in the oviduct.

Required for the transport of riboflavin to the developing oocyte. This chain is Riboflavin-binding protein, found in Gallus gallus (Chicken).